The chain runs to 535 residues: Bifunctional purine biosynthesis protein PurH (535 aa).

One can recognise an MGS-like domain in the interval 6–151 (TRLPIRRALI…KNHKDVAIVV (146 aa)).

Belongs to the PurH family.

The enzyme catalyses (6R)-10-formyltetrahydrofolate + 5-amino-1-(5-phospho-beta-D-ribosyl)imidazole-4-carboxamide = 5-formamido-1-(5-phospho-D-ribosyl)imidazole-4-carboxamide + (6S)-5,6,7,8-tetrahydrofolate. It carries out the reaction IMP + H2O = 5-formamido-1-(5-phospho-D-ribosyl)imidazole-4-carboxamide. It functions in the pathway purine metabolism; IMP biosynthesis via de novo pathway; 5-formamido-1-(5-phospho-D-ribosyl)imidazole-4-carboxamide from 5-amino-1-(5-phospho-D-ribosyl)imidazole-4-carboxamide (10-formyl THF route): step 1/1. The protein operates within purine metabolism; IMP biosynthesis via de novo pathway; IMP from 5-formamido-1-(5-phospho-D-ribosyl)imidazole-4-carboxamide: step 1/1. The protein is Bifunctional purine biosynthesis protein PurH of Pseudomonas fluorescens (strain SBW25).